A 383-amino-acid chain; its full sequence is Glycoprotein gp2 (383 aa).

An N-terminal signal peptide occupies residues 1–25 (MGFIYARKLLLCMAVSIYAIGSTTT). The segment covering 24–75 (TTTETTTSSSSTSGSGQSTSSGTTNSSSSPTTSPPTTSSSPPTSTHTSSPST) has biased composition (low complexity). The tract at residues 24-136 (TTTETTTSSS…RNNSIEIVPQ (113 aa)) is disordered. An N-linked (GlcNAc...) asparagine; by host glycan is attached at Asn48. The span at 81–91 (HAGHHRGRAGG) shows a compositional bias: basic residues. Residue Asn128 is glycosylated (N-linked (GlcNAc...) asparagine; by host). A helical membrane pass occupies residues 354–371 (LVAATTLTVTILCLLCCL).

The protein localises to the virion membrane. In terms of biological role, the glycoprotein gp2 from the avirulent strain Kentucky A (KyA) is probably non functional since this strain harbors an in-frame deletion of 1,242 nucleotides in gene 71. The protein is Glycoprotein gp2 (US4) of Equus caballus (Horse).